Consider the following 217-residue polypeptide: Protein GrpE (217 aa).

Belongs to the GrpE family. As to quaternary structure, homodimer.

The protein resides in the cytoplasm. Functionally, participates actively in the response to hyperosmotic and heat shock by preventing the aggregation of stress-denatured proteins, in association with DnaK and GrpE. It is the nucleotide exchange factor for DnaK and may function as a thermosensor. Unfolded proteins bind initially to DnaJ; upon interaction with the DnaJ-bound protein, DnaK hydrolyzes its bound ATP, resulting in the formation of a stable complex. GrpE releases ADP from DnaK; ATP binding to DnaK triggers the release of the substrate protein, thus completing the reaction cycle. Several rounds of ATP-dependent interactions between DnaJ, DnaK and GrpE are required for fully efficient folding. In Mycoplasma genitalium (strain ATCC 33530 / DSM 19775 / NCTC 10195 / G37) (Mycoplasmoides genitalium), this protein is Protein GrpE.